The chain runs to 60 residues: uncharacterized protein (60 aa).

This is an uncharacterized protein from Ureaplasma parvum serovar 3 (strain ATCC 700970).